A 116-amino-acid polypeptide reads, in one-letter code: MKKEILEVFDNTYPDRNYTIEIVNPEFTSVCPKTGLPDFGTITVHYVPDRTCVELKSLKYYFLEFRNAGIFYENITNRILDDLVAAMQPRSITVTTKWKARGGITETVTASHTAQG.

The active-site Thioimide intermediate is the Cys31. Asp38 acts as the Proton donor in catalysis. Substrate-binding positions include 53–55 and 72–73; these read VEL and YE.

This sequence belongs to the GTP cyclohydrolase I family. QueF type 1 subfamily.

It is found in the cytoplasm. It catalyses the reaction 7-aminomethyl-7-carbaguanine + 2 NADP(+) = 7-cyano-7-deazaguanine + 2 NADPH + 3 H(+). Its pathway is tRNA modification; tRNA-queuosine biosynthesis. Functionally, catalyzes the NADPH-dependent reduction of 7-cyano-7-deazaguanine (preQ0) to 7-aminomethyl-7-deazaguanine (preQ1). The sequence is that of NADPH-dependent 7-cyano-7-deazaguanine reductase from Chlorobium phaeovibrioides (strain DSM 265 / 1930) (Prosthecochloris vibrioformis (strain DSM 265)).